We begin with the raw amino-acid sequence, 126 residues long: Histone H2B type 1-N (126 aa).

A compositionally biased stretch (low complexity) spans 1-12 (MPEPSKSAPAPK). The tract at residues 1-36 (MPEPSKSAPAPKKGSKKAVTKAQKKDGKKRKRSRKE) is disordered. Position 2 is an N-acetylproline (P2). E3 is modified (ADP-ribosyl glutamic acid). K6 carries the post-translational modification N6-(2-hydroxyisobutyryl)lysine; alternate. N6-(beta-hydroxybutyryl)lysine; alternate is present on K6. K6 carries the N6-acetyllysine; alternate modification. At K6 the chain carries N6-butyryllysine; alternate. At K6 the chain carries N6-crotonyllysine; alternate. K6 bears the N6-lactoyllysine; alternate mark. K6 participates in a covalent cross-link: Glycyl lysine isopeptide (Lys-Gly) (interchain with G-Cter in SUMO2); alternate. S7 is modified (ADP-ribosylserine). K12 is subject to N6-(beta-hydroxybutyryl)lysine; alternate. 2 positions are modified to N6-acetyllysine; alternate: K12 and K13. 2 positions are modified to N6-crotonyllysine; alternate: K12 and K13. An N6-lactoyllysine; alternate modification is found at K12. K13 is modified (N6-(2-hydroxyisobutyryl)lysine; alternate). Phosphoserine; by STK4/MST1 is present on S15. K16, K17, K21, and K24 each carry N6-acetyllysine; alternate. N6-crotonyllysine; alternate occurs at positions 16, 17, 21, and 24. 4 positions are modified to N6-lactoyllysine; alternate: K16, K17, K21, and K24. N6-(beta-hydroxybutyryl)lysine; alternate is present on residues K17 and K21. K17 carries the post-translational modification N6-glutaryllysine; alternate. K21 and K24 each carry N6-(2-hydroxyisobutyryl)lysine; alternate. At K21 the chain carries N6-butyryllysine; alternate. K21 is covalently cross-linked (Glycyl lysine isopeptide (Lys-Gly) (interchain with G-Cter in SUMO2); alternate). The residue at position 25 (K25) is an N6-(2-hydroxyisobutyryl)lysine. The residue at position 35 (K35) is an N6-(2-hydroxyisobutyryl)lysine; alternate. Position 35 is an N6-(beta-hydroxybutyryl)lysine; alternate (K35). The residue at position 35 (K35) is an N6-crotonyllysine; alternate. Position 35 is an N6-glutaryllysine; alternate (K35). At K35 the chain carries N6-succinyllysine; alternate. Residue K35 forms a Glycyl lysine isopeptide (Lys-Gly) (interchain with G-Cter in ubiquitin); alternate linkage. E36 is modified (polyADP-ribosyl glutamic acid). Position 37 is a phosphoserine; by AMPK (S37). N6-(2-hydroxyisobutyryl)lysine; alternate is present on residues K44, K47, and K58. K44 carries the N6-lactoyllysine; alternate modification. K44 and K47 each carry N6-glutaryllysine; alternate. K47 carries the post-translational modification N6-methyllysine; alternate. N6,N6-dimethyllysine; alternate is present on K58. R80 carries the post-translational modification Dimethylated arginine. The residue at position 86 (K86) is an N6-(2-hydroxyisobutyryl)lysine; alternate. N6-(beta-hydroxybutyryl)lysine; alternate is present on K86. K86 bears the N6-acetyllysine; alternate mark. At K86 the chain carries N6-lactoyllysine; alternate. Residue K86 is modified to N6,N6,N6-trimethyllysine; alternate. 2 positions are modified to omega-N-methylarginine: R87 and R93. At K109 the chain carries N6-(2-hydroxyisobutyryl)lysine; alternate. K109 carries the N6-lactoyllysine; alternate modification. K109 is modified (N6-glutaryllysine; alternate). N6-methyllysine; alternate is present on K109. An O-linked (GlcNAc) serine glycan is attached at S113. T116 carries the post-translational modification Phosphothreonine. N6-(2-hydroxyisobutyryl)lysine; alternate occurs at positions 117 and 121. K117 and K121 each carry N6-(beta-hydroxybutyryl)lysine; alternate. N6-lactoyllysine; alternate occurs at positions 117 and 121. N6-glutaryllysine; alternate occurs at positions 117 and 121. N6-succinyllysine; alternate occurs at positions 117 and 121. An N6-malonyllysine; alternate modification is found at K117. K117 carries the post-translational modification N6-methylated lysine; alternate. K121 participates in a covalent cross-link: Glycyl lysine isopeptide (Lys-Gly) (interchain with G-Cter in ubiquitin); alternate.

This sequence belongs to the histone H2B family. The nucleosome is a histone octamer containing two molecules each of H2A, H2B, H3 and H4 assembled in one H3-H4 heterotetramer and two H2A-H2B heterodimers. The octamer wraps approximately 147 bp of DNA. In terms of processing, monoubiquitination at Lys-35 (H2BK34Ub) by the MSL1/MSL2 dimer is required for histone H3 'Lys-4' (H3K4me) and 'Lys-79' (H3K79me) methylation and transcription activation at specific gene loci, such as HOXA9 and MEIS1 loci. Similarly, monoubiquitination at Lys-121 (H2BK120Ub) by the RNF20/40 complex gives a specific tag for epigenetic transcriptional activation and is also prerequisite for histone H3 'Lys-4' and 'Lys-79' methylation. It also functions cooperatively with the FACT dimer to stimulate elongation by RNA polymerase II. H2BK120Ub also acts as a regulator of mRNA splicing: deubiquitination by USP49 is required for efficient cotranscriptional splicing of a large set of exons. Phosphorylation at Ser-37 (H2BS36ph) by AMPK in response to stress promotes transcription. Phosphorylated on Ser-15 (H2BS14ph) by STK4/MST1 during apoptosis; which facilitates apoptotic chromatin condensation. Also phosphorylated on Ser-15 in response to DNA double strand breaks (DSBs), and in correlation with somatic hypermutation and immunoglobulin class-switch recombination. Post-translationally, glcNAcylation at Ser-113 promotes monoubiquitination of Lys-121. It fluctuates in response to extracellular glucose, and associates with transcribed genes. In terms of processing, ADP-ribosylated by PARP1 or PARP2 on Ser-7 (H2BS6ADPr) in response to DNA damage. H2BS6ADPr promotes recruitment of CHD1L. Mono-ADP-ribosylated on Glu-3 (H2BE2ADPr) by PARP3 in response to single-strand breaks. Poly ADP-ribosylation on Glu-36 (H2BE35ADPr) by PARP1 regulates adipogenesis: it inhibits phosphorylation at Ser-37 (H2BS36ph), thereby blocking expression of pro-adipogenetic genes. Crotonylation (Kcr) is specifically present in male germ cells and marks testis-specific genes in post-meiotic cells, including X-linked genes that escape sex chromosome inactivation in haploid cells. Crotonylation marks active promoters and enhancers and confers resistance to transcriptional repressors. It is also associated with post-meiotically activated genes on autosomes. Post-translationally, lactylated in macrophages by EP300/P300 by using lactoyl-CoA directly derived from endogenous or exogenous lactate, leading to stimulates gene transcription.

The protein resides in the nucleus. It is found in the chromosome. Core component of nucleosome. Nucleosomes wrap and compact DNA into chromatin, limiting DNA accessibility to the cellular machineries which require DNA as a template. Histones thereby play a central role in transcription regulation, DNA repair, DNA replication and chromosomal stability. DNA accessibility is regulated via a complex set of post-translational modifications of histones, also called histone code, and nucleosome remodeling. In Homo sapiens (Human), this protein is Histone H2B type 1-N.